A 150-amino-acid polypeptide reads, in one-letter code: UPF0201 protein APE_1751 (150 aa).

It belongs to the UPF0201 family.

In Aeropyrum pernix (strain ATCC 700893 / DSM 11879 / JCM 9820 / NBRC 100138 / K1), this protein is UPF0201 protein APE_1751.